The chain runs to 40 residues: Photosystem II reaction center protein J (40 aa).

Residues 8-28 (IPLWLIGTVAGIAVIGLVGVF) form a helical membrane-spanning segment.

The protein belongs to the PsbJ family. PSII is composed of 1 copy each of membrane proteins PsbA, PsbB, PsbC, PsbD, PsbE, PsbF, PsbH, PsbI, PsbJ, PsbK, PsbL, PsbM, PsbT, PsbX, PsbY, PsbZ, Psb30/Ycf12, at least 3 peripheral proteins of the oxygen-evolving complex and a large number of cofactors. It forms dimeric complexes.

Its subcellular location is the plastid. It localises to the chloroplast thylakoid membrane. In terms of biological role, one of the components of the core complex of photosystem II (PSII). PSII is a light-driven water:plastoquinone oxidoreductase that uses light energy to abstract electrons from H(2)O, generating O(2) and a proton gradient subsequently used for ATP formation. It consists of a core antenna complex that captures photons, and an electron transfer chain that converts photonic excitation into a charge separation. The protein is Photosystem II reaction center protein J of Secale cereale (Rye).